The sequence spans 222 residues: Ribonuclease HII (222 aa).

The RNase H type-2 domain maps to 17–206; the sequence is DLVAGVDEVG…VRAAHEARAS (190 aa). Positions 23, 24, and 115 each coordinate a divalent metal cation.

This sequence belongs to the RNase HII family. It depends on Mn(2+) as a cofactor. Mg(2+) serves as cofactor.

It localises to the cytoplasm. It carries out the reaction Endonucleolytic cleavage to 5'-phosphomonoester.. Functionally, endonuclease that specifically degrades the RNA of RNA-DNA hybrids. In Pseudomonas savastanoi pv. phaseolicola (strain 1448A / Race 6) (Pseudomonas syringae pv. phaseolicola (strain 1448A / Race 6)), this protein is Ribonuclease HII.